Reading from the N-terminus, the 185-residue chain is Intraflagellar transport protein 22 homolog (185 aa).

Residues 10-17 (GPCESGKT), 63-67 (DCGGD), and 123-126 (HKPG) contribute to the GTP site. Position 137 is a phosphoserine (serine 137).

Belongs to the small GTPase superfamily. Rab family. Component of the IFT complex B, at least composed of IFT20, IFT22, IFT25, IFT27, IFT46, IFT52, TRAF3IP1/IFT54, IFT57, IFT74, IFT80, IFT81, and IFT88. Interacts with IFT88. Interacts with CFAP61.

Its subcellular location is the cell projection. The protein localises to the cilium. Small GTPase-like component of the intraflagellar transport (IFT) complex B. This is Intraflagellar transport protein 22 homolog (Ift22) from Rattus norvegicus (Rat).